We begin with the raw amino-acid sequence, 380 residues long: uncharacterized protein (380 aa).

The 4Fe-4S ferredoxin-type domain occupies 287-318; it reads LRPKIYQDKCKNCRECLVEKYCPTFAIKRENG.

This is an uncharacterized protein from Methanocaldococcus jannaschii (strain ATCC 43067 / DSM 2661 / JAL-1 / JCM 10045 / NBRC 100440) (Methanococcus jannaschii).